The primary structure comprises 258 residues: MLEAMREKPPLVHCITNYVAMNIAANVLLASGASPAMVHAPEEAGEFAGIASALTVNIGTLSTQWLDGMRAAAKAAASSGKPWVLDPVAHYATAFRRQAVADLLALKPTIIRGNASEIIALAGGESRGQGVDSRDPVEQAEDSARRLAERQQAIVAVTGAVDFVTDGNRAVRIKGGSVLMPQVTALGCALTCLVGAFAATAPEDLFGATVAALATFAVAGEDAALGAAGPGSFAWRFLDALAALDGEALDARARVSIA.

Residue Met-37 participates in substrate binding. ATP contacts are provided by Arg-112 and Thr-158. Ala-185 is a substrate binding site.

The protein belongs to the Thz kinase family. The cofactor is Mg(2+).

It catalyses the reaction 5-(2-hydroxyethyl)-4-methylthiazole + ATP = 4-methyl-5-(2-phosphooxyethyl)-thiazole + ADP + H(+). It participates in cofactor biosynthesis; thiamine diphosphate biosynthesis; 4-methyl-5-(2-phosphoethyl)-thiazole from 5-(2-hydroxyethyl)-4-methylthiazole: step 1/1. Its function is as follows. Catalyzes the phosphorylation of the hydroxyl group of 4-methyl-5-beta-hydroxyethylthiazole (THZ). This chain is Hydroxyethylthiazole kinase, found in Rhizobium etli (strain CIAT 652).